Consider the following 178-residue polypeptide: Peptide methionine sulfoxide reductase MsrA (178 aa).

The active site involves C11.

The protein belongs to the MsrA Met sulfoxide reductase family.

It carries out the reaction L-methionyl-[protein] + [thioredoxin]-disulfide + H2O = L-methionyl-(S)-S-oxide-[protein] + [thioredoxin]-dithiol. The catalysed reaction is [thioredoxin]-disulfide + L-methionine + H2O = L-methionine (S)-S-oxide + [thioredoxin]-dithiol. Has an important function as a repair enzyme for proteins that have been inactivated by oxidation. Catalyzes the reversible oxidation-reduction of methionine sulfoxide in proteins to methionine. The protein is Peptide methionine sulfoxide reductase MsrA of Natronomonas pharaonis (strain ATCC 35678 / DSM 2160 / CIP 103997 / JCM 8858 / NBRC 14720 / NCIMB 2260 / Gabara) (Halobacterium pharaonis).